A 148-amino-acid polypeptide reads, in one-letter code: UPF0756 membrane protein YeaL (148 aa).

The next 4 helical transmembrane spans lie at 14–34 (ALGF…LIIV), 51–71 (LTVG…SGTL), 86–106 (LVAI…ITLM), and 121–141 (VLGV…AGLV).

The protein belongs to the UPF0756 family.

It localises to the cell membrane. The polypeptide is UPF0756 membrane protein YeaL (Salmonella choleraesuis (strain SC-B67)).